A 1216-amino-acid chain; its full sequence is RAB11-binding protein RELCH (1216 aa).

The segment covering 1-13 (MAAMAPGGGGSGS) has biased composition (gly residues). 2 disordered regions span residues 1 to 67 (MAAM…GSSA) and 133 to 179 (NPGN…NRAG). A2 is modified (N-acetylalanine). S20 and S22 each carry phosphoserine. The segment covering 21–31 (DSDEDDDEVAA) has biased composition (acidic residues). The residue at position 32 (T32) is a Phosphothreonine. Phosphoserine is present on residues S54 and S56. Positions 142–154 (GTPPGMGAPGIPG) are enriched in low complexity. Phosphoserine is present on residues S180 and S182. At T183 the chain carries Phosphothreonine. S186 carries the post-translational modification Phosphoserine. A coiled-coil region spans residues 197–231 (NRETDERVAVLEFELRKAKETIQALRANLTKAAEH). A LisH domain is found at 255–287 (EKRALNFLVNEFLLKNNYKLTSITFSDENDDQD). The stretch at 358–397 (LVQKLEDKISLLNNEKWSLMEQIRRLESEMDILKAEHFAT) forms a coiled coil. S385 bears the Phosphoserine mark. The segment at 409 to 473 (VWSSQKDSED…ELPPSSVSNK (65 aa)) is disordered. Positions 429 to 440 (DQEKTKDVHLEI) are enriched in basic and acidic residues. A Phosphoserine modification is found at S453. Residues 497 to 779 (CRMSADSRLG…SSKAKLHGEV (283 aa)) are interaction with RAB11A and RAB11B. 2 HEAT repeats span residues 601–639 (LLPQCWEQINHKYPERRLLVAESCGALAPYLPKEIRSSL) and 640–679 (VLSMLQQMLMEDKADLVREAVIKSLGIIMGYIDDPDKYQQ). Position 792 is a phosphoserine (S792). One copy of the HEAT 3 repeat lies at 1004-1042 (VVPALITLSSDPEISVRIATIPAFGTIMETVIQRELLER). A Phosphoserine modification is found at S1149.

As to quaternary structure, interacts with RAB11A (VIA-GTP form). Interacts with RAB11B. Interacts (via the third HEAT repeat) with OSBP (via C-terminus). Found in a complex composed of RELCH, OSBP1 and RAB11A.

It is found in the recycling endosome. The protein localises to the golgi apparatus. The protein resides in the trans-Golgi network. In terms of biological role, regulates intracellular cholesterol distribution from recycling endosomes to the trans-Golgi network through interactions with RAB11 and OSBP. Functions in membrane tethering and promotes OSBP-mediated cholesterol transfer between RAB11-bound recycling endosomes and OSBP-bound Golgi-like membranes. The sequence is that of RAB11-binding protein RELCH (Relch) from Mus musculus (Mouse).